The sequence spans 258 residues: uncharacterized protein (258 aa).

An N-terminal signal peptide occupies residues 1 to 23; that stretch reads MVWCHYILLVLTFFLFTTFFTAA. Residues 24 to 64 lie on the Cytoplasmic side of the membrane; sequence CPAIFTWLNSLFRLSNDSPHVVHTSIAEVGDIEDGRVDKDG. Residues 65 to 85 traverse the membrane as a helical segment; sequence VLFVDLEFFLGCLPFFFFALV. Residues 86–123 are Extracellular-facing; it reads DQSSSSSVCKPLSPSDAKRSSNSLLRLSLVSSNDSDSS. N118 is a glycosylation site (N-linked (GlcNAc...) asparagine). The chain crosses the membrane as a helical span at residues 124-144; the sequence is VSVSTFAFFFFFLFFLFFVFT. Residues 145–230 lie on the Cytoplasmic side of the membrane; sequence CTFSSELTSS…SSSISFRISS (86 aa). A helical membrane pass occupies residues 231–251; sequence IFFLCSLVFMWFFNCFSDLNV. At 252–258 the chain is on the extracellular side; it reads LLQIKHS.

It is found in the membrane. This is an uncharacterized protein from Saccharomyces cerevisiae (strain ATCC 204508 / S288c) (Baker's yeast).